The following is a 316-amino-acid chain: Adenine deaminase (316 aa).

3 residues coordinate Zn(2+): His-14, His-16, and His-194. Residue Glu-197 is the Proton donor of the active site. Asp-275 lines the Zn(2+) pocket. Asp-276 provides a ligand contact to substrate.

This sequence belongs to the metallo-dependent hydrolases superfamily. Adenosine and AMP deaminases family. Adenine deaminase type 2 subfamily. Requires Zn(2+) as cofactor.

It catalyses the reaction adenine + H2O + H(+) = hypoxanthine + NH4(+). Its function is as follows. Catalyzes the hydrolytic deamination of adenine to hypoxanthine. Plays an important role in the purine salvage pathway and in nitrogen catabolism. This chain is Adenine deaminase, found in Pseudomonas aeruginosa (strain UCBPP-PA14).